The chain runs to 205 residues: Ephrin-A1 (205 aa).

Positions 1 to 18 are cleaved as a signal peptide; it reads MEFLWAPLLGLCCSLAAA. The Ephrin RBD domain occupies 19–151; sequence DRHTVFWNSS…RLKVTVSGKI (133 aa). An N-linked (GlcNAc...) asparagine glycan is attached at Asn-26. Cystine bridges form between Cys-51–Cys-92 and Cys-80–Cys-140. Ser-182 carries the GPI-anchor amidated serine lipid modification. The propeptide at 183-205 is removed in mature form; sequence AAPRLFPLAWTVLLLPLLLLQTP.

This sequence belongs to the ephrin family. In terms of assembly, monomer. Homodimer. Forms heterodimers with EPHA2. Binds to the receptor tyrosine kinases EPHA2, EPHA3, EPHA4, EPHA5, EPHA6 and EPHA7. Also binds with low affinity to EPHA1. Undergoes proteolysis by a metalloprotease to give rise to a soluble monomeric form. In terms of processing, N-Glycosylation is required for binding to EPHA2 receptor and inducing its internalization. Brain. Down-regulated in primary glioma tissues compared to the normal tissues. The soluble monomeric form is expressed in the glioblastoma multiforme (GBM) and breast cancer cells (at protein level).

The protein resides in the cell membrane. It localises to the secreted. Cell surface GPI-bound ligand for Eph receptors, a family of receptor tyrosine kinases which are crucial for migration, repulsion and adhesion during neuronal, vascular and epithelial development. Binds promiscuously Eph receptors residing on adjacent cells, leading to contact-dependent bidirectional signaling into neighboring cells. Plays an important role in angiogenesis and tumor neovascularization. The recruitment of VAV2, VAV3 and PI3-kinase p85 subunit by phosphorylated EPHA2 is critical for EFNA1-induced RAC1 GTPase activation and vascular endothelial cell migration and assembly. Exerts anti-oncogenic effects in tumor cells through activation and down-regulation of EPHA2. Activates EPHA2 by inducing tyrosine phosphorylation which leads to its internalization and degradation. Acts as a negative regulator in the tumorigenesis of gliomas by down-regulating EPHA2 and FAK. Can evoke collapse of embryonic neuronal growth cone and regulates dendritic spine morphogenesis. In Homo sapiens (Human), this protein is Ephrin-A1 (EFNA1).